The chain runs to 471 residues: UDP-glycosyltransferase CGT (471 aa).

The active-site Proton acceptor is the H24. Position 24 (H24) interacts with an anthocyanidin. D120 serves as the catalytic Charge relay. T143 is a UDP-alpha-D-glucose binding site. The UDP stretch occupies residues 280–281 (SR). 7 residues coordinate UDP-alpha-D-glucose: V343, Q345, H360, W363, N364, S365, and E368. Residue G383 participates in an anthocyanidin binding. Residues D384 and Q385 each contribute to the UDP-alpha-D-glucose site.

The protein belongs to the UDP-glycosyltransferase family.

It carries out the reaction a 3'-hydro-2'-hydroxy-beta-oxodihydrochalcone + UDP-alpha-D-glucose = a 3'-(beta-D-glucopyranosyl)-2'-hydroxy-beta-oxodihydrochalcone + UDP + H(+). Functionally, UDP-glucose-dependent glucosyltransferase catalyzing the c-glucosylation of 2-hydroxyflavanones. This is UDP-glycosyltransferase CGT from Oryza sativa subsp. japonica (Rice).